We begin with the raw amino-acid sequence, 118 residues long: Large ribosomal subunit protein bL19 (118 aa).

It belongs to the bacterial ribosomal protein bL19 family.

This protein is located at the 30S-50S ribosomal subunit interface and may play a role in the structure and function of the aminoacyl-tRNA binding site. This chain is Large ribosomal subunit protein bL19 (rplS), found in Serratia marcescens.